We begin with the raw amino-acid sequence, 59 residues long: Large ribosomal subunit protein uL30 (59 aa).

The protein belongs to the universal ribosomal protein uL30 family. Part of the 50S ribosomal subunit.

This is Large ribosomal subunit protein uL30 from Desulfatibacillum aliphaticivorans.